The chain runs to 62 residues: Conotoxin Lt5.5 (62 aa).

Residues 1 to 22 (MRCLQVFIIFLLLIPSPPSVDA) form the signal peptide. Residues 23-48 (QRKTKDDVPLASFHDNAKRTLKRLWN) constitute a propeptide that is removed on maturation.

The protein belongs to the conotoxin T superfamily. In terms of processing, contains 2 disulfide bonds that can be either 'C1-C3, C2-C4' or 'C1-C4, C2-C3', since these disulfide connectivities have been observed for conotoxins with cysteine framework V (for examples, see AC P0DQQ7 and AC P81755). As to expression, expressed by the venom duct.

It is found in the secreted. The chain is Conotoxin Lt5.5 from Conus litteratus (Lettered cone).